A 377-amino-acid polypeptide reads, in one-letter code: Transmembrane 6 superfamily member 2 (377 aa).

A run of 9 helical transmembrane segments spans residues I10–L30, L34–L54, P63–L83, F111–I131, F140–I160, P170–F190, L219–V239, M269–F289, and T332–Y352. EXPERA domains are found at residues Y61–G186 and A217–A351.

It belongs to the TM6SF family. Substantial expression in liver and intestine, whereas all other tissues analyzed show low levels.

The protein localises to the endoplasmic reticulum membrane. The protein resides in the endoplasmic reticulum-Golgi intermediate compartment membrane. In terms of biological role, regulator of liver fat metabolism influencing triglyceride secretion and hepatic lipid droplet content. May function as sterol isomerase. The polypeptide is Transmembrane 6 superfamily member 2 (TM6SF2) (Homo sapiens (Human)).